The following is a 136-amino-acid chain: MRKSTMDAEPTSSPPAGQWSIYLVRTAAGLLYTGISTDPIRRLRQHQSGKGSRALRGKGPLVLVWQQTVGNKGAALRLEYRLKQQSKAFKERLVQEPDRWADWSQPWLTVVTPPLEAPQKRPLQAVAKEGSDNREG.

The GIY-YIG domain occupies 17–92 (GQWSIYLVRT…KQQSKAFKER (76 aa)).

This sequence belongs to the UPF0213 family.

The polypeptide is UPF0213 protein ASA_0550 (Aeromonas salmonicida (strain A449)).